The primary structure comprises 535 residues: Pentatricopeptide repeat-containing protein At5g16420, mitochondrial (535 aa).

A mitochondrion-targeting transit peptide spans 1-28 (MFLSRVNPTRFPPFVASRRLFSASASAA). PPR repeat units follow at residues 82–112 (NYDT…LRNS), 119–153 (GENL…GVKR), 154–189 (SVRS…GITP), 190–224 (NIFT…GLVP), 225–259 (NLVT…GWYP), 260–294 (DATT…EIEP), 295–329 (NEVT…SFMP), 330–364 (DSSL…NCMP), 365–395 (DNAL…FEKG), 399–433 (SLLT…KCKP), 434–468 (NAFT…GCFP), and 469–503 (NKTT…GKVD).

It belongs to the PPR family. P subfamily.

Its subcellular location is the mitochondrion. This is Pentatricopeptide repeat-containing protein At5g16420, mitochondrial from Arabidopsis thaliana (Mouse-ear cress).